A 431-amino-acid chain; its full sequence is Hydroxylamine reductase (431 aa).

[4Fe-4S] cluster is bound by residues Cys-5, Cys-8, Cys-17, and Cys-23. His-131, Glu-155, Cys-199, Cys-286, Cys-314, Cys-339, Glu-373, and Lys-375 together coordinate hybrid [4Fe-2O-2S] cluster. Position 286 is a cysteine persulfide (Cys-286).

Belongs to the HCP family. [4Fe-4S] cluster is required as a cofactor. The cofactor is hybrid [4Fe-2O-2S] cluster.

It is found in the cytoplasm. The enzyme catalyses A + NH4(+) + H2O = hydroxylamine + AH2 + H(+). Functionally, catalyzes the reduction of hydroxylamine to form NH(3) and H(2)O. The protein is Hydroxylamine reductase of Thermotoga maritima (strain ATCC 43589 / DSM 3109 / JCM 10099 / NBRC 100826 / MSB8).